We begin with the raw amino-acid sequence, 88 residues long: FXYD domain-containing ion transport regulator 4 (88 aa).

Residues 1–20 form the signal peptide; it reads MEEITCAFLLLLAGLPALEA. Topologically, residues 21–38 are extracellular; the sequence is SDPVDKDSPFYYDWESLQ. A helical membrane pass occupies residues 39–59; sequence LGGLIFGGLLCIAGIAMALSG. The Cytoplasmic portion of the chain corresponds to 60-88; that stretch reads KCKCRRTHKPSSLPGKATPLIIPGSANTC.

It belongs to the FXYD family. In terms of assembly, regulatory subunit of the sodium/potassium-transporting ATPase which is composed of a catalytic alpha subunit, a non-catalytic beta subunit and a regulatory subunit. The regulatory subunit, a member of the FXYD protein family, modulates the enzymatic activity in a tissue- and isoform-specific way by changing affinities of the Na+/K+-ATPase toward Na(+), K(+) or ATP.

It localises to the cell membrane. The protein resides in the basolateral cell membrane. In terms of biological role, associates with and regulates the activity of the sodium/potassium-transporting ATPase (NKA) which catalyzes the hydrolysis of ATP coupled with the exchange of Na(+) and K(+) ions across the plasma membrane. Increases the apparent affinity of the transporter for Na(+) and increases NKA activity. In Mus musculus (Mouse), this protein is FXYD domain-containing ion transport regulator 4 (Fxyd4).